The following is a 423-amino-acid chain: Lysosomal acid phosphatase (423 aa).

An N-terminal signal peptide occupies residues 1–30 (MAGKRSGWSRAALLQLLLGVNLVVMPPTQA). Topologically, residues 31–380 (RSLRFVTLLY…QVASGPADTE (350 aa)) are lumenal. The active-site Nucleophile is His42. Residues Asn92, Asn133, Asn167, Asn177, Asn191, and Asn267 are each glycosylated (N-linked (GlcNAc...) asparagine). 3 cysteine pairs are disulfide-bonded: Cys159–Cys370, Cys212–Cys310, and Cys345–Cys349. Asp287 functions as the Proton donor in the catalytic mechanism. Residues Asn322 and Asn331 are each glycosylated (N-linked (GlcNAc...) asparagine). A helical membrane pass occupies residues 381–401 (VIVALAVCGSILFLLIVLLLT). At 402-423 (VLFRMQAQPPGYRHVADGEDHA) the chain is on the cytoplasmic side.

The protein belongs to the histidine acid phosphatase family. Post-translationally, the membrane-bound form is converted to the soluble form by sequential proteolytic processing. First, the C-terminal cytoplasmic tail is removed. Cleavage by a lysosomal protease releases the soluble form in the lysosome lumen.

It localises to the lysosome membrane. It is found in the lysosome lumen. The enzyme catalyses a phosphate monoester + H2O = an alcohol + phosphate. In Pongo abelii (Sumatran orangutan), this protein is Lysosomal acid phosphatase (ACP2).